The primary structure comprises 556 residues: Mitochondrial distribution and morphology protein 34-2 (556 aa).

One can recognise an SMP-LTD domain in the interval 1 to 195 (MAFNFNWSPL…LPAIIHRLSL (195 aa)). 3 disordered regions span residues 206–239 (EEMN…DSLG), 299–423 (TDTS…PVTP), and 440–473 (HLPS…DATP). The span at 299–333 (TDTSEFPSSVISPLSPTLSREQSQMGSMSSLHETA) shows a compositional bias: polar residues. Over residues 334 to 357 (SNASMQSRPSMSSHSFSTSTYGLS) the composition is skewed to low complexity. Residues 362–374 (RHSKAHARKRKKR) are compositionally biased toward basic residues. The segment covering 375–385 (VVDLRRPKTTD) has biased composition (basic and acidic residues). Polar residues predominate over residues 391–402 (SDESVMTESSRP). The span at 459 to 468 (ETIRGPKAED) shows a compositional bias: basic and acidic residues.

This sequence belongs to the MDM34 family. Component of the ER-mitochondria encounter structure (ERMES) or MDM complex, composed of mmm1, mdm10, mdm12 and mdm34.

The protein resides in the mitochondrion outer membrane. Functionally, component of the ERMES/MDM complex, which serves as a molecular tether to connect the endoplasmic reticulum (ER) and mitochondria. Components of this complex are involved in the control of mitochondrial shape and protein biogenesis, and function in nonvesicular lipid trafficking between the ER and mitochondria. Mdm34 is required for the interaction of the ER-resident membrane protein mmm1 and the outer mitochondrial membrane-resident beta-barrel protein mdm10. This chain is Mitochondrial distribution and morphology protein 34-2, found in Penicillium rubens (strain ATCC 28089 / DSM 1075 / NRRL 1951 / Wisconsin 54-1255) (Penicillium chrysogenum).